A 140-amino-acid polypeptide reads, in one-letter code: Nucleoside triphosphatase NudI (140 aa).

The Nudix hydrolase domain occupies 1-140 (MRHRTIVCPL…RVTLSLKGLL (140 aa)). Residues 38-58 (GVEPGERIEEALRREIREELG) carry the Nudix box motif.

It belongs to the Nudix hydrolase family. NudI subfamily. In terms of assembly, monomer. Requires Mg(2+) as cofactor.

It catalyses the reaction a ribonucleoside 5'-triphosphate + H2O = a ribonucleoside 5'-phosphate + diphosphate + H(+). It carries out the reaction a 2'-deoxyribonucleoside 5'-triphosphate + H2O = a 2'-deoxyribonucleoside 5'-phosphate + diphosphate + H(+). The catalysed reaction is dUTP + H2O = dUMP + diphosphate + H(+). The enzyme catalyses dTTP + H2O = dTMP + diphosphate + H(+). It catalyses the reaction dCTP + H2O = dCMP + diphosphate + H(+). In terms of biological role, catalyzes the hydrolysis of nucleoside triphosphates, with a preference for pyrimidine deoxynucleoside triphosphates (dUTP, dTTP and dCTP). This Klebsiella pneumoniae subsp. pneumoniae (strain ATCC 700721 / MGH 78578) protein is Nucleoside triphosphatase NudI.